The chain runs to 286 residues: PTS system mannose-specific EIID component (286 aa).

Residue Met-1 is modified to N-formylmethionine. The Cytoplasmic segment spans residues Met-1 to Thr-17. In terms of domain architecture, PTS EIID spans Lys-14–Leu-284. The stretch at Gln-18–Arg-55 is an intramembrane region. Residues Leu-56–Glu-62 lie on the Cytoplasmic side of the membrane. The stretch at Ala-63–Gln-95 is an intramembrane region. The Cytoplasmic portion of the chain corresponds to Arg-96 to Asp-103. A transmembrane helix spans residues Asp-104–Met-143. Topologically, residues Ser-144–Leu-147 are periplasmic. Over Leu-148–Gly-176 the chain traverses the membrane. The Cytoplasmic portion of the chain corresponds to Ile-177–Gly-186. The chain crosses the lipid bilayer at residues Phe-187–His-212. At Val-213 to Gly-244 the chain is on the periplasmic side. Residues Leu-245–Leu-258 are membrane-embedded. The Cytoplasmic segment spans residues Arg-259–Pro-264. Positions Leu-265–Leu-283 form a transmembrane segment. Over Leu-284 to Leu-286 the chain is Periplasmic.

Homotrimer of protomers that are composed of two subunits, IIC and IID.

It localises to the cell inner membrane. In terms of biological role, the phosphoenolpyruvate-dependent sugar phosphotransferase system (sugar PTS), a major carbohydrate active transport system, catalyzes the phosphorylation of incoming sugar substrates concomitantly with their translocation across the cell membrane. The enzyme II ManXYZ PTS system is involved in mannose transport. This Escherichia coli O6:H1 (strain CFT073 / ATCC 700928 / UPEC) protein is PTS system mannose-specific EIID component (manZ).